The chain runs to 255 residues: RNA polymerase sigma-F factor (255 aa).

Positions 61–74 (DLFQIGCIGLLKSV) match the Polymerase core binding motif. The H-T-H motif DNA-binding region spans 221–240 (QSEVAERLGISQVQVSRLEK).

Belongs to the sigma-70 factor family. As to quaternary structure, interacts transiently with the RNAP core.

Interaction with SpoIIAB inhibits sigma-F activity throughout the cell before the formation of the asymmetric septum; after septation the interaction is confined to the mother cell, and sigma-F activity is released in the prespore. Fin, a second, forespore-specific anti-sigma factor is induced in 2 successive waves by sigma-F and sigma-G, by antagonizing sigma-F it allows the switch to sigma-G factor and progression to the late sporulation development stages. Sigma factors are initiation factors that promote the attachment of RNA polymerase to specific initiation sites and are then released. This sigma factor is responsible for the expression of sporulation specific genes. Interaction with SpoIIAB inhibits sigma-F activity throughout the cell before the formation of the asymmetric septum; after septation the interaction is confined to the mother cell, and sigma F activity is released in the prespore. Responsible for expression of csfB (the anti-sigma-G factor Gin). Associates with the RNAP core only in stationary phase cells. The polypeptide is RNA polymerase sigma-F factor (sigF) (Bacillus subtilis (strain 168)).